The primary structure comprises 318 residues: MTISKFNPQKPFECFIVQSEAMKSAVENAKRFAMFDAPLLIQGETGSGKDLLAKACHYQSLRRDKKFIAVNCAGLPDEDAESEMFGRKVGDSETIGFFEYANKGTVLLDGIAELSLSLQAKLLRFLTDGSFRRVGEEKEHYANVRVICTSQVPLHLLVEQGKVRADLFHRLNVLTINVPALRDRMADIEPLAQGFLQEISEELKIAKPTFDKDFLLYLQKYDWKGNVRELYNTLYRACSLVQDNHLTIESLNLALPQSAVISLDEFENKTLDEIIGFYEAQVLKLFYAEYPSTRKLAQRLGVSHTAIANKLKQYGIGK.

The 225-residue stretch at 15 to 239 folds into the Sigma-54 factor interaction; truncated domain; it reads FIVQSEAMKS…LYNTLYRACS (225 aa). ATP-binding positions include 43–50 and 101–110; these read GETGSGKD and ANKGTVLLDG. A DNA-binding region (H-T-H motif) is located at residues 292-312; sequence STRKLAQRLGVSHTAIANKLK.

Homodimer. In presence of tyrosine (or high concentrations of phenylalanine or tryptophan) and ATP, it self-associates to form a hexamer.

It is found in the cytoplasm. With respect to regulation, the DNA binding ability is drastically reduced in the presence of ATP. Tyrosine further reduces the binding affinity of TyrR in the presence of ATP. Transcriptional regulator of the TyrR regulon, which includes a number of genes coding for proteins involved in the biosynthesis or transport of the three aromatic amino acids, phenylalanine, tyrosine and tryptophan. These three aromatic amino acids act as effectors which bind to the TyrR protein to form an active regulatory protein. Acts by binding specifically to TyrR boxes in the promoter region of the target genes. Can efficiently repress the transcription of the aroF promoter, but lacks the ability to function as a transcriptional activator. The sequence is that of HTH-type transcriptional regulatory protein TyrR from Haemophilus influenzae (strain ATCC 51907 / DSM 11121 / KW20 / Rd).